We begin with the raw amino-acid sequence, 254 residues long: Phosphoribosylaminoimidazole-succinocarboxamide synthase (254 aa).

Belongs to the SAICAR synthetase family.

It carries out the reaction 5-amino-1-(5-phospho-D-ribosyl)imidazole-4-carboxylate + L-aspartate + ATP = (2S)-2-[5-amino-1-(5-phospho-beta-D-ribosyl)imidazole-4-carboxamido]succinate + ADP + phosphate + 2 H(+). It participates in purine metabolism; IMP biosynthesis via de novo pathway; 5-amino-1-(5-phospho-D-ribosyl)imidazole-4-carboxamide from 5-amino-1-(5-phospho-D-ribosyl)imidazole-4-carboxylate: step 1/2. The chain is Phosphoribosylaminoimidazole-succinocarboxamide synthase from Gluconacetobacter diazotrophicus (strain ATCC 49037 / DSM 5601 / CCUG 37298 / CIP 103539 / LMG 7603 / PAl5).